Consider the following 985-residue polypeptide: Alpha-glucosidase (985 aa).

The signal sequence occupies residues 1–25 (MAGLKSFLASSWLLPVACGASQSIV). 6 N-linked (GlcNAc...) asparagine glycosylation sites follow: asparagine 126, asparagine 145, asparagine 220, asparagine 255, asparagine 349, and asparagine 424. The active-site Nucleophile is the aspartate 492. Glutamate 495 is a catalytic residue. Asparagine 508, asparagine 536, asparagine 539, asparagine 602, and asparagine 624 each carry an N-linked (GlcNAc...) asparagine glycan. The Proton donor role is filled by aspartate 660. N-linked (GlcNAc...) asparagine glycans are attached at residues asparagine 661, asparagine 835, asparagine 881, asparagine 929, and asparagine 957.

It belongs to the glycosyl hydrolase 31 family.

The catalysed reaction is Hydrolysis of terminal, non-reducing (1-&gt;4)-linked alpha-D-glucose residues with release of alpha-D-glucose.. Hydrolyzes malto-oligosaccharides, but has a low activity toward soluble starch. This chain is Alpha-glucosidase (agdA), found in Aspergillus oryzae (strain ATCC 42149 / RIB 40) (Yellow koji mold).